Reading from the N-terminus, the 176-residue chain is Transcription factor E (176 aa).

An HTH TFE/IIEalpha-type domain is found at glutamate 8–proline 90.

The protein belongs to the TFE family. Monomer. Interaction with RNA polymerase subunits RpoF and RpoE is necessary for Tfe stimulatory transcription activity. Able to interact with Tbp and RNA polymerase in the absence of DNA promoter. Interacts both with the preinitiation and elongation complexes.

In terms of biological role, transcription factor that plays a role in the activation of archaeal genes transcribed by RNA polymerase. Facilitates transcription initiation by enhancing TATA-box recognition by TATA-box-binding protein (Tbp), and transcription factor B (Tfb) and RNA polymerase recruitment. Not absolutely required for transcription in vitro, but particularly important in cases where Tbp or Tfb function is not optimal. It dynamically alters the nucleic acid-binding properties of RNA polymerases by stabilizing the initiation complex and destabilizing elongation complexes. Seems to translocate with the RNA polymerase following initiation and acts by binding to the non template strand of the transcription bubble in elongation complexes. The chain is Transcription factor E from Haloarcula marismortui (strain ATCC 43049 / DSM 3752 / JCM 8966 / VKM B-1809) (Halobacterium marismortui).